The chain runs to 464 residues: Fumarate hydratase class II 1 (464 aa).

Substrate is bound by residues Ser96 to Thr98, His127 to Asp130, Ser137 to Asn139, and Thr185. The active-site Proton donor/acceptor is His186. Residue Ser316 is part of the active site. Substrate contacts are provided by residues Ser317 and Lys322 to Asn324.

Belongs to the class-II fumarase/aspartase family. Fumarase subfamily. Homotetramer.

Its subcellular location is the cytoplasm. It carries out the reaction (S)-malate = fumarate + H2O. It participates in carbohydrate metabolism; tricarboxylic acid cycle; (S)-malate from fumarate: step 1/1. In terms of biological role, involved in the TCA cycle. Catalyzes the stereospecific interconversion of fumarate to L-malate. The protein is Fumarate hydratase class II 1 of Pseudomonas aeruginosa (strain ATCC 15692 / DSM 22644 / CIP 104116 / JCM 14847 / LMG 12228 / 1C / PRS 101 / PAO1).